A 232-amino-acid polypeptide reads, in one-letter code: Phosphatidylserine decarboxylase proenzyme (232 aa).

The active-site Schiff-base intermediate with substrate; via pyruvic acid is Ser190. A Pyruvic acid (Ser); by autocatalysis modification is found at Ser190.

The protein belongs to the phosphatidylserine decarboxylase family. PSD-A subfamily. Heterodimer of a large membrane-associated beta subunit and a small pyruvoyl-containing alpha subunit. Pyruvate is required as a cofactor. Is synthesized initially as an inactive proenzyme. Formation of the active enzyme involves a self-maturation process in which the active site pyruvoyl group is generated from an internal serine residue via an autocatalytic post-translational modification. Two non-identical subunits are generated from the proenzyme in this reaction, and the pyruvate is formed at the N-terminus of the alpha chain, which is derived from the carboxyl end of the proenzyme. The post-translation cleavage follows an unusual pathway, termed non-hydrolytic serinolysis, in which the side chain hydroxyl group of the serine supplies its oxygen atom to form the C-terminus of the beta chain, while the remainder of the serine residue undergoes an oxidative deamination to produce ammonia and the pyruvoyl prosthetic group on the alpha chain.

Its subcellular location is the cell membrane. It carries out the reaction a 1,2-diacyl-sn-glycero-3-phospho-L-serine + H(+) = a 1,2-diacyl-sn-glycero-3-phosphoethanolamine + CO2. Its pathway is phospholipid metabolism; phosphatidylethanolamine biosynthesis; phosphatidylethanolamine from CDP-diacylglycerol: step 2/2. Catalyzes the formation of phosphatidylethanolamine (PtdEtn) from phosphatidylserine (PtdSer). The protein is Phosphatidylserine decarboxylase proenzyme of Cereibacter sphaeroides (strain KD131 / KCTC 12085) (Rhodobacter sphaeroides).